The chain runs to 95 residues: uncharacterized protein (95 aa).

A coiled-coil region spans residues 60-89 (VKNMINRIVEELDKRIDEIKEGLNELEKSG).

This is an uncharacterized protein from Sulfolobus islandicus filamentous virus (isolate Iceland/Hveragerdi) (SIFV).